A 186-amino-acid chain; its full sequence is MNMKTLLALAVSAVCSVSVAQAHEHNTIPKGASIEVKVQQLDPVNGNKDVGTVTITESNYGLVFTPDLQGLSEGLHGFHIHENPSCEPKEKEGKLTAGLGAGGHWDPKGAKQHGYPWQDDAHLGDLPALTVLHDGTATNPVLAPRLKHLDDVRGHSIMIHTGGDNHSDHPAPLGGGGPRMACGVIK.

Positions 1–22 are cleaved as a signal peptide; sequence MNMKTLLALAVSAVCSVSVAQA. Residues His-79, His-81, and His-104 each contribute to the Cu cation site. A disulfide bridge links Cys-86 with Cys-182. Residues His-104, His-113, His-122, and Asp-125 each contribute to the Zn(2+) site. His-160 lines the Cu cation pocket.

Belongs to the Cu-Zn superoxide dismutase family. As to quaternary structure, homodimer. It depends on Cu cation as a cofactor. The cofactor is Zn(2+).

It localises to the periplasm. It catalyses the reaction 2 superoxide + 2 H(+) = H2O2 + O2. In terms of biological role, destroys radicals which are normally produced within the cells and which are toxic to biological systems. This Neisseria meningitidis serogroup A / serotype 4A (strain DSM 15465 / Z2491) protein is Superoxide dismutase [Cu-Zn] (sodC).